The primary structure comprises 496 residues: UDP-glycosyltransferase 73C2 (496 aa).

Residues Ser297, 357 to 359 (SPQ), 374 to 382 (HCGWNSTLE), and 396 to 399 (FGDQ) contribute to the UDP-alpha-D-glucose site.

The protein belongs to the UDP-glycosyltransferase family.

The protein is UDP-glycosyltransferase 73C2 (UGT73C2) of Arabidopsis thaliana (Mouse-ear cress).